Here is a 595-residue protein sequence, read N- to C-terminus: Ketol-acid reductoisomerase, chloroplastic (595 aa).

A chloroplast-targeting transit peptide spans 1-72 (MAATAATTFS…GGGSALSAQM (72 aa)). The region spanning 108 to 306 (VRGGRNLFPL…ALGSPFTFAT (199 aa)) is the KARI N-terminal Rossmann domain. Residues 129 to 136 (GVIGWGSQ), 162 to 167 (RKGSNS), and 201 to 205 (SDSAQ) contribute to the NADP(+) site. H226 is an active-site residue. KARI C-terminal knotted domains lie at 307–455 (TLEQ…RPAG) and 456–592 (DLGP…RPEL). Mg(2+) contacts are provided by D315, E319, E492, and E496. S518 serves as a coordination point for substrate.

It belongs to the ketol-acid reductoisomerase family. In terms of assembly, homodimer. Requires Mg(2+) as cofactor.

The protein resides in the plastid. It localises to the chloroplast. The enzyme catalyses (2R)-2,3-dihydroxy-3-methylbutanoate + NADP(+) = (2S)-2-acetolactate + NADPH + H(+). It carries out the reaction (2R,3R)-2,3-dihydroxy-3-methylpentanoate + NADP(+) = (S)-2-ethyl-2-hydroxy-3-oxobutanoate + NADPH + H(+). Its pathway is amino-acid biosynthesis; L-isoleucine biosynthesis; L-isoleucine from 2-oxobutanoate: step 2/4. It participates in amino-acid biosynthesis; L-valine biosynthesis; L-valine from pyruvate: step 2/4. The chain is Ketol-acid reductoisomerase, chloroplastic (AHRI) from Spinacia oleracea (Spinach).